Reading from the N-terminus, the 321-residue chain is S-methyl-5'-thioadenosine phosphorylase (321 aa).

Residues threonine 30, 73–74, and 106–107 contribute to the phosphate site; these read RH and SA. Methionine 215 is a binding site for substrate. Serine 216 contributes to the phosphate binding site. Residue 239 to 241 participates in substrate binding; the sequence is DYD.

It belongs to the PNP/MTAP phosphorylase family. MTAP subfamily. Homotrimer.

Its subcellular location is the cytoplasm. The protein resides in the nucleus. It catalyses the reaction S-methyl-5'-thioadenosine + phosphate = 5-(methylsulfanyl)-alpha-D-ribose 1-phosphate + adenine. Its pathway is amino-acid biosynthesis; L-methionine biosynthesis via salvage pathway; S-methyl-5-thio-alpha-D-ribose 1-phosphate from S-methyl-5'-thioadenosine (phosphorylase route): step 1/1. Its function is as follows. Catalyzes the reversible phosphorylation of S-methyl-5'-thioadenosine (MTA) to adenine and 5-methylthioribose-1-phosphate. Involved in the breakdown of MTA, a major by-product of polyamine biosynthesis. Responsible for the first step in the methionine salvage pathway after MTA has been generated from S-adenosylmethionine. Has broad substrate specificity with 6-aminopurine nucleosides as preferred substrates. In Yarrowia lipolytica (strain CLIB 122 / E 150) (Yeast), this protein is S-methyl-5'-thioadenosine phosphorylase.